The chain runs to 267 residues: Tryptophan synthase alpha chain (267 aa).

Catalysis depends on proton acceptor residues Glu47 and Asp58.

This sequence belongs to the TrpA family. In terms of assembly, tetramer of two alpha and two beta chains.

The catalysed reaction is (1S,2R)-1-C-(indol-3-yl)glycerol 3-phosphate + L-serine = D-glyceraldehyde 3-phosphate + L-tryptophan + H2O. Its pathway is amino-acid biosynthesis; L-tryptophan biosynthesis; L-tryptophan from chorismate: step 5/5. Functionally, the alpha subunit is responsible for the aldol cleavage of indoleglycerol phosphate to indole and glyceraldehyde 3-phosphate. This is Tryptophan synthase alpha chain from Prosthecochloris aestuarii (strain DSM 271 / SK 413).